Reading from the N-terminus, the 402-residue chain is NADH-quinone oxidoreductase subunit D (402 aa).

The protein belongs to the complex I 49 kDa subunit family. In terms of assembly, NDH-1 is composed of 14 different subunits. Subunits NuoB, C, D, E, F, and G constitute the peripheral sector of the complex.

It is found in the cell inner membrane. It catalyses the reaction a quinone + NADH + 5 H(+)(in) = a quinol + NAD(+) + 4 H(+)(out). Its function is as follows. NDH-1 shuttles electrons from NADH, via FMN and iron-sulfur (Fe-S) centers, to quinones in the respiratory chain. The immediate electron acceptor for the enzyme in this species is believed to be ubiquinone. Couples the redox reaction to proton translocation (for every two electrons transferred, four hydrogen ions are translocated across the cytoplasmic membrane), and thus conserves the redox energy in a proton gradient. The sequence is that of NADH-quinone oxidoreductase subunit D from Cereibacter sphaeroides (strain ATCC 17029 / ATH 2.4.9) (Rhodobacter sphaeroides).